Here is a 486-residue protein sequence, read N- to C-terminus: Glutamyl-tRNA(Gln) amidotransferase subunit A (486 aa).

Catalysis depends on charge relay system residues lysine 76 and serine 151. Residue serine 175 is the Acyl-ester intermediate of the active site.

This sequence belongs to the amidase family. GatA subfamily. Heterotrimer of A, B and C subunits.

It catalyses the reaction L-glutamyl-tRNA(Gln) + L-glutamine + ATP + H2O = L-glutaminyl-tRNA(Gln) + L-glutamate + ADP + phosphate + H(+). Its function is as follows. Allows the formation of correctly charged Gln-tRNA(Gln) through the transamidation of misacylated Glu-tRNA(Gln) in organisms which lack glutaminyl-tRNA synthetase. The reaction takes place in the presence of glutamine and ATP through an activated gamma-phospho-Glu-tRNA(Gln). The protein is Glutamyl-tRNA(Gln) amidotransferase subunit A of Nitrosomonas eutropha (strain DSM 101675 / C91 / Nm57).